A 460-amino-acid chain; its full sequence is tRNA modification GTPase MnmE (460 aa).

(6S)-5-formyl-5,6,7,8-tetrahydrofolate contacts are provided by Arg29, Glu91, and Lys132. A TrmE-type G domain is found at 227-383; sequence GISIALIGKT…LIDTIIKKCG (157 aa). Residue Asn237 coordinates K(+). Residues 237 to 242, 256 to 262, and 281 to 284 each bind GTP; these read NVGKSS, TNIPGTT, and DTAG. Ser241 is a binding site for Mg(2+). Residues Thr256, Ile258, and Thr261 each contribute to the K(+) site. A Mg(2+)-binding site is contributed by Thr262. Lys460 provides a ligand contact to (6S)-5-formyl-5,6,7,8-tetrahydrofolate.

Belongs to the TRAFAC class TrmE-Era-EngA-EngB-Septin-like GTPase superfamily. TrmE GTPase family. Homodimer. Heterotetramer of two MnmE and two MnmG subunits. The cofactor is K(+).

It is found in the cytoplasm. Its function is as follows. Exhibits a very high intrinsic GTPase hydrolysis rate. Involved in the addition of a carboxymethylaminomethyl (cmnm) group at the wobble position (U34) of certain tRNAs, forming tRNA-cmnm(5)s(2)U34. This Prochlorococcus marinus (strain MIT 9215) protein is tRNA modification GTPase MnmE.